The primary structure comprises 524 residues: Bifunctional purine biosynthesis protein PurH (524 aa).

The MGS-like domain occupies 1 to 145 (MIQQALLSVS…KNHRDVTVIV (145 aa)).

The protein belongs to the PurH family.

It carries out the reaction (6R)-10-formyltetrahydrofolate + 5-amino-1-(5-phospho-beta-D-ribosyl)imidazole-4-carboxamide = 5-formamido-1-(5-phospho-D-ribosyl)imidazole-4-carboxamide + (6S)-5,6,7,8-tetrahydrofolate. It catalyses the reaction IMP + H2O = 5-formamido-1-(5-phospho-D-ribosyl)imidazole-4-carboxamide. Its pathway is purine metabolism; IMP biosynthesis via de novo pathway; 5-formamido-1-(5-phospho-D-ribosyl)imidazole-4-carboxamide from 5-amino-1-(5-phospho-D-ribosyl)imidazole-4-carboxamide (10-formyl THF route): step 1/1. It participates in purine metabolism; IMP biosynthesis via de novo pathway; IMP from 5-formamido-1-(5-phospho-D-ribosyl)imidazole-4-carboxamide: step 1/1. The chain is Bifunctional purine biosynthesis protein PurH from Ralstonia pickettii (strain 12J).